A 1364-amino-acid polypeptide reads, in one-letter code: Serine protease EatA (1364 aa).

The signal sequence occupies residues 1–56; sequence MNKVFSLKYSFLAKGFIAVSELARRVSVKGKLKSASSIIISPITIAIVSYAPPSLA. The region spanning 57 to 307 is the Peptidase S6 domain; the sequence is ATVNADISYQ…VVTTQDFLHQ (251 aa). Catalysis depends on charge relay system residues H134, D162, and S267. The region spanning 1098–1364 is the Autotransporter domain; that stretch reads DSQGDAGGWA…SINANFRYYF (267 aa).

Post-translationally, cleaved to release the mature protein from the outer membrane.

It localises to the periplasm. It is found in the secreted. The protein localises to the cell surface. Its subcellular location is the cell outer membrane. With respect to regulation, inhibited by phenylmethylsulfonyl fluoride. In terms of biological role, autotransporter serine protease probably involved in virulence. The chain is Serine protease EatA (eatA) from Escherichia coli O78:H11 (strain H10407 / ETEC).